Here is a 488-residue protein sequence, read N- to C-terminus: Probable malate:quinone oxidoreductase (488 aa).

It belongs to the MQO family. The cofactor is FAD.

It carries out the reaction (S)-malate + a quinone = a quinol + oxaloacetate. It participates in carbohydrate metabolism; tricarboxylic acid cycle; oxaloacetate from (S)-malate (quinone route): step 1/1. The protein is Probable malate:quinone oxidoreductase of Neisseria meningitidis serogroup C / serotype 2a (strain ATCC 700532 / DSM 15464 / FAM18).